Consider the following 310-residue polypeptide: Proline iminopeptidase (310 aa).

Positions 41–288 (LVTLHGGPGG…NSSHMAMWEE (248 aa)) constitute an AB hydrolase-1 domain. The active-site Nucleophile is the serine 116. Aspartate 255 is a catalytic residue. Residue histidine 282 is the Proton donor of the active site.

The protein belongs to the peptidase S33 family. Part of the tricorn proteolytic complex.

The catalysed reaction is Release of N-terminal proline from a peptide.. Its function is as follows. Cleaves H-Pro-AMC as well as a wide spectrum of amino acid substrates and several peptide substrates without a proline at the N-terminus. In conjunction with the three factors F1, F2 and F3, Tricorn degrades oligopeptides in a sequential manner, yielding free amino acids. This chain is Proline iminopeptidase (pip), found in Saccharolobus solfataricus (strain ATCC 35092 / DSM 1617 / JCM 11322 / P2) (Sulfolobus solfataricus).